We begin with the raw amino-acid sequence, 396 residues long: S-adenosylmethionine synthase 2 (396 aa).

Mg(2+) is bound at residue E13. H19 contributes to the ATP binding site. K(+) is bound at residue E47. 2 residues coordinate L-methionine: E60 and Q103. Residues 171 to 173, 239 to 242, D250, 256 to 257, A273, K277, and K281 each bind ATP; these read DGK, SGRF, and RK. D250 serves as a coordination point for L-methionine. K281 contacts L-methionine.

The protein belongs to the AdoMet synthase family. Homotetramer. Mn(2+) serves as cofactor. It depends on Mg(2+) as a cofactor. The cofactor is Co(2+). Requires K(+) as cofactor. As to expression, expressed in roots, stems and leaves (at protein level).

It is found in the cytoplasm. The enzyme catalyses L-methionine + ATP + H2O = S-adenosyl-L-methionine + phosphate + diphosphate. Its pathway is amino-acid biosynthesis; S-adenosyl-L-methionine biosynthesis; S-adenosyl-L-methionine from L-methionine: step 1/1. Functionally, catalyzes the formation of S-adenosylmethionine from methionine and ATP. The reaction comprises two steps that are both catalyzed by the same enzyme: formation of S-adenosylmethionine (AdoMet) and triphosphate, and subsequent hydrolysis of the triphosphate. May be involved in the synthesis of betain in response to abiotic stress such as high salinity. The polypeptide is S-adenosylmethionine synthase 2 (SAMS2) (Atriplex nummularia (Old man saltbush)).